The primary structure comprises 98 residues: NADH-ubiquinone oxidoreductase chain 4L (98 aa).

The next 3 membrane-spanning stretches (helical) occupy residues 1-21, 29-49, and 61-81; these read MHYI…GALL, SLLC…LIAL, and IILL…LVMV.

The protein belongs to the complex I subunit 4L family. As to quaternary structure, core subunit of respiratory chain NADH dehydrogenase (Complex I) which is composed of 45 different subunits.

It localises to the mitochondrion inner membrane. It catalyses the reaction a ubiquinone + NADH + 5 H(+)(in) = a ubiquinol + NAD(+) + 4 H(+)(out). Its function is as follows. Core subunit of the mitochondrial membrane respiratory chain NADH dehydrogenase (Complex I) which catalyzes electron transfer from NADH through the respiratory chain, using ubiquinone as an electron acceptor. Part of the enzyme membrane arm which is embedded in the lipid bilayer and involved in proton translocation. The chain is NADH-ubiquinone oxidoreductase chain 4L (MT-ND4L) from Procavia capensis (Rock hyrax).